We begin with the raw amino-acid sequence, 335 residues long: MGLNINRPRRGSLAFSPRKRAKRPVPRIRSWPEEDTVRLQAFPVYKAGMSHAFIKEDNPKSPNAGQEVFTPITILEAPPINVCAIRVYGRNERNYLTTLTEVWADNLDKELERKIKLPKKEDRKTVEDLEALKDKIEDVRVLVHTNPKLTCLPKKKPEILEIRIGGKDIEERLNYAKEILGKQLNITDVFQEGELVDTIGVTKGKGFQGQVKRWGVKIQFGKHARKGVGRHVGSIGPWQPKMVMWSVPMPGQMGYHQRTEYNKRILKIGNNGDEITPKGGFLHYGVIRNNYVVLKGSVQGPAKRLIVLRRAIRPQEPLIKVPEITYISTTSKQGK.

Belongs to the universal ribosomal protein uL3 family. Part of the 50S ribosomal subunit. Forms a cluster with proteins L14 and L24e.

One of the primary rRNA binding proteins, it binds directly near the 3'-end of the 23S rRNA, where it nucleates assembly of the 50S subunit. The sequence is that of Large ribosomal subunit protein uL3 from Methanocaldococcus jannaschii (strain ATCC 43067 / DSM 2661 / JAL-1 / JCM 10045 / NBRC 100440) (Methanococcus jannaschii).